Reading from the N-terminus, the 620-residue chain is Glutathione-regulated potassium-efflux system protein KefC (620 aa).

12 helical membrane-spanning segments follow: residues 4–24, 26–46, 54–74, 90–110, 114–134, 149–169, 178–198, 218–238, 270–290, 294–314, 327–347, and 359–379; these read HTLI…PIAV, LGLG…PWGL, SILH…GLEL, GALQ…LLGL, VAEL…MQAM, FAVL…IPLL, MGAF…VVLL, VFSA…EEVG, GLLL…GTLL, LRIV…LWLI, WFAV…GTAQ, and SLTL…VILN. The RCK N-terminal domain occupies 399–518; that stretch reads QPRVIIAGFG…AGVEKPERET (120 aa). Residues 597–620 are disordered; the sequence is GWQGTEEGKHTGNMADEPETKPSS.

This sequence belongs to the monovalent cation:proton antiporter 2 (CPA2) transporter (TC 2.A.37) family. KefC subfamily. In terms of assembly, homodimer. Interacts with the regulatory subunit KefF.

The protein localises to the cell inner membrane. Its function is as follows. Pore-forming subunit of a potassium efflux system that confers protection against electrophiles. Catalyzes K(+)/H(+) antiport. This Shigella sonnei (strain Ss046) protein is Glutathione-regulated potassium-efflux system protein KefC.